A 313-amino-acid polypeptide reads, in one-letter code: Ribosomal RNA small subunit methyltransferase H (313 aa).

S-adenosyl-L-methionine-binding positions include 34–36 (GGH), Asp53, Phe80, Asp101, and Gln108.

The protein belongs to the methyltransferase superfamily. RsmH family.

The protein resides in the cytoplasm. It carries out the reaction cytidine(1402) in 16S rRNA + S-adenosyl-L-methionine = N(4)-methylcytidine(1402) in 16S rRNA + S-adenosyl-L-homocysteine + H(+). Functionally, specifically methylates the N4 position of cytidine in position 1402 (C1402) of 16S rRNA. This is Ribosomal RNA small subunit methyltransferase H from Lacticaseibacillus casei (strain BL23) (Lactobacillus casei).